A 525-amino-acid chain; its full sequence is Sensory neuron membrane protein 1 (525 aa).

Residues 1 to 11 (MLLPKELKYAA) are Cytoplasmic-facing. Residues 12 to 32 (IAGGVAVFGLIFGWVLFPVIL) traverse the membrane as a helical segment. Over 33-456 (KGQLKKEMAL…LKHQLFIPKR (424 aa)) the chain is Extracellular. N-linked (GlcNAc...) asparagine glycosylation is found at N67, N229, and N324. Disulfide bonds link C268-C333, C297-C352, and C335-C341. N440 is a glycosylation site (N-linked (GlcNAc...) asparagine). Residues 457-477 (VVGVLRWWMVSFGSLGADIGI) form a helical membrane-spanning segment. Over 478–525 (VYHFRDHIMRLAVSGDTKVSKVTPEEDPEQKDISVIGPPAQEPAKINI) the chain is Cytoplasmic. The interval 497-525 (SKVTPEEDPEQKDISVIGPPAQEPAKINI) is disordered.

Belongs to the CD36 family.

The protein localises to the cell membrane. In terms of biological role, plays an olfactory role that is not restricted to pheromone sensitivity. This chain is Sensory neuron membrane protein 1, found in Mamestra brassicae (Cabbage moth).